A 117-amino-acid polypeptide reads, in one-letter code: Serine rich endogenous peptide 5 (117 aa).

An N-terminal signal peptide occupies residues 1–31 (MATKTSNFVSLRVSLFILLLFISSQVAIADA). The short motif at 41–55 (LQIVRRSRSQRGRQY) is the SCOOP motif element. Basic residues predominate over residues 42-51 (QIVRRSRSQR). The disordered stretch occupies residues 42–117 (QIVRRSRSQR…LPYASSPTST (76 aa)). The SxS motif essential for MIK2 binding signature appears at 47 to 49 (SRS). The span at 60-84 (LRVPPPPPPPLPQMPSAATPPPMPQ) shows a compositional bias: pro residues.

Interacts with MIK2 (via extracellular leucine-rich repeat domain); this interaction triggers the formation of complex between MIK2 and the BAK1/SERK3 and SERK4 coreceptors, and subsequent BAK1 activation by phosphorylation.

Its subcellular location is the cell membrane. It localises to the secreted. The protein localises to the extracellular space. It is found in the apoplast. Its function is as follows. Brassicaceae-specific phytocytokine (plant endogenous peptide released into the apoplast) perceived by MIK2 in a BAK1/SERK3 and SERK4 coreceptors-dependent manner, that modulates various physiological and antimicrobial processes including growth prevention and reactive oxygen species (ROS) response regulation. This is Serine rich endogenous peptide 5 from Arabidopsis thaliana (Mouse-ear cress).